Reading from the N-terminus, the 327-residue chain is Gonadotropin-releasing hormone receptor (327 aa).

Residues 1–37 (MASASPEQNQNHCSAVNNSNMLMQGNLPTLTLSGKIR) lie on the Extracellular side of the membrane. N-linked (GlcNAc...) asparagine glycosylation is present at N17. The chain crosses the membrane as a helical span at residues 38 to 57 (VTVTFFLFLLSTIFNASFLL). The Cytoplasmic portion of the chain corresponds to 58–76 (KLQKWTQKKEKGKKLSRMK). The chain crosses the membrane as a helical span at residues 77–96 (VLLKHLTLANLLETLIVMPL). At 97–114 (DGMWNITVQWYAGEFLCK) the chain is on the extracellular side. N-linked (GlcNAc...) asparagine glycosylation is present at N101. The cysteines at positions 113 and 195 are disulfide-linked. Residues 115-136 (VLSYLKLFSMYAPAFMMVVISL) form a helical membrane-spanning segment. Topologically, residues 137–163 (DRSLAITRPLAMKNNGKLGQSMIGLAW) are cytoplasmic. Residues 164 to 183 (LLSGIFAGPQLYIFRMIHLA) form a helical membrane-spanning segment. Residues 184 to 211 (DSSGQTEGFPQCVTHCSFPQWWHQAFYN) lie on the Extracellular side of the membrane. Residues 212–231 (FFTFSCLFIIPLFITLICNA) form a helical membrane-spanning segment. The Cytoplasmic portion of the chain corresponds to 232–280 (KIIFTLTRVLHQDPHELQLNQSKNNIPRARLRTLKMTVAFATSFTVCWT). Residues 281–299 (PYYVLGIWYWFDPEMLNRV) form a helical membrane-spanning segment. Residues 300–305 (SDPVNH) lie on the Extracellular side of the membrane. Residues 306–325 (FFFLFALLNPCFDPLIYGYF) traverse the membrane as a helical segment. Residues 326–327 (SL) lie on the Cytoplasmic side of the membrane.

This sequence belongs to the G-protein coupled receptor 1 family.

The protein resides in the cell membrane. Functionally, receptor for gonadotropin releasing hormone (GnRH) that mediates the action of GnRH to stimulate the secretion of the gonadotropic hormones luteinizing hormone (LH) and follicle-stimulating hormone (FSH). This receptor mediates its action by association with G-proteins that activate a phosphatidylinositol-calcium second messenger system. In Canis lupus familiaris (Dog), this protein is Gonadotropin-releasing hormone receptor (GNRHR).